The sequence spans 76 residues: Heat shock factor-binding protein 1 (76 aa).

It belongs to the HSBP1 family. As to quaternary structure, homohexamer. Associates with heptad repeats of HSF1 trimers and probably also HSF1 monomers, and with HSP70. Association with HSF1 trimers and HSP70 coincides with attenuation of heat shock response and the conversion of HSF1 trimer to monomer.

It localises to the nucleus. Negative regulator of the heat shock response. Negatively affects HSF1 DNA-binding activity. May have a role in the suppression of the activation of the stress response during the aging process. This chain is Heat shock factor-binding protein 1 (HSBP1), found in Pongo abelii (Sumatran orangutan).